Here is a 105-residue protein sequence, read N- to C-terminus: Nucleoid-associated protein SaurJH1_0513 (105 aa).

The interval Met-1–Ile-33 is disordered. The segment covering Met-7–Lys-16 has biased composition (low complexity). Basic and acidic residues predominate over residues Met-21 to Ile-33.

This sequence belongs to the YbaB/EbfC family. In terms of assembly, homodimer.

The protein localises to the cytoplasm. It is found in the nucleoid. Binds to DNA and alters its conformation. May be involved in regulation of gene expression, nucleoid organization and DNA protection. In Staphylococcus aureus (strain JH1), this protein is Nucleoid-associated protein SaurJH1_0513.